Consider the following 356-residue polypeptide: tRNA N6-adenosine threonylcarbamoyltransferase (356 aa).

Positions 115 and 119 each coordinate Fe cation. Substrate-binding positions include 138 to 142 (LVSGG), Asp-171, Gly-184, and Asn-283. Asp-311 serves as a coordination point for Fe cation.

The protein belongs to the KAE1 / TsaD family. Fe(2+) serves as cofactor.

It localises to the cytoplasm. It carries out the reaction L-threonylcarbamoyladenylate + adenosine(37) in tRNA = N(6)-L-threonylcarbamoyladenosine(37) in tRNA + AMP + H(+). Functionally, required for the formation of a threonylcarbamoyl group on adenosine at position 37 (t(6)A37) in tRNAs that read codons beginning with adenine. Is involved in the transfer of the threonylcarbamoyl moiety of threonylcarbamoyl-AMP (TC-AMP) to the N6 group of A37, together with TsaE and TsaB. TsaD likely plays a direct catalytic role in this reaction. The sequence is that of tRNA N6-adenosine threonylcarbamoyltransferase from Prochlorococcus marinus subsp. pastoris (strain CCMP1986 / NIES-2087 / MED4).